A 1014-amino-acid polypeptide reads, in one-letter code: Ephrin type-B receptor 6 (1014 aa).

The N-terminal stretch at 1–32 is a signal peptide; that stretch reads MATEGTTGSGSRVVAGMVCSLWLLVLGSSVLA. The Extracellular portion of the chain corresponds to 33–591; that stretch reads LEEVLLDTTG…LPEKLSLVIG (559 aa). Positions 34 to 232 constitute an Eph LBD domain; the sequence is EEVLLDTTGE…FSYTCPSVLR (199 aa). Fibronectin type-III domains lie at 364-479 and 480-575; these read PPSA…TSHE and VPSA…TLPQ. N473 is a glycosylation site (N-linked (GlcNAc...) asparagine). The helical transmembrane segment at 592-612 threads the bilayer; sequence SILGALAFLLLAAITVLAVIF. Topologically, residues 613 to 1014 are cytoplasmic; it reads QRKRRGTGYT…HLRQPGSVEV (402 aa). In terms of domain architecture, Protein kinase spans 663-912; the sequence is IKIEEVIGAG…QLVAAFDKMI (250 aa). An ATP-binding site is contributed by 669-677; that stretch reads IGAGSFGEV. In terms of domain architecture, SAM spans 941-1005; it reads PCLDSPQAWL…LHNIQLLQQH (65 aa). Positions 1012–1014 match the PDZ-binding motif; that stretch reads VEV.

It belongs to the protein kinase superfamily. Tyr protein kinase family. Ephrin receptor subfamily. As to quaternary structure, interacts with CBL and EPHB1. Interacts with FYN; this interaction takes place in a ligand-independent manner. Ligand-binding increases phosphorylation on tyrosine residues. Phosphorylation on tyrosine residues is mediated by transphosphorylation by the catalytically active EPHB1 in a ligand-independent manner. Tyrosine phosphorylation of the receptor may act as a switch on the functional transition from cell adhesion/attraction to de-adhesion/repulsion. High level in thymus, and brain. Very low levels of expression in kidney, lung, liver, bone marrow, skeletal muscle, spleen from 2 week old and adult mice, heart, testes and embryonic stem cells.

The protein localises to the cell membrane. It localises to the secreted. Its function is as follows. Kinase-defective receptor for members of the ephrin-B family. Binds to ephrin-B1 and ephrin-B2. Modulates cell adhesion and migration by exerting both positive and negative effects upon stimulation with ephrin-B2. Inhibits JNK activation, T-cell receptor-induced IL-2 secretion and CD25 expression upon stimulation with ephrin-B2. The sequence is that of Ephrin type-B receptor 6 (Ephb6) from Mus musculus (Mouse).